The primary structure comprises 472 residues: 3-isopropylmalate dehydratase large subunit (472 aa).

The [4Fe-4S] cluster site is built by Cys347, Cys407, and Cys410.

Belongs to the aconitase/IPM isomerase family. LeuC type 1 subfamily. As to quaternary structure, heterodimer of LeuC and LeuD. [4Fe-4S] cluster is required as a cofactor.

It catalyses the reaction (2R,3S)-3-isopropylmalate = (2S)-2-isopropylmalate. It participates in amino-acid biosynthesis; L-leucine biosynthesis; L-leucine from 3-methyl-2-oxobutanoate: step 2/4. Catalyzes the isomerization between 2-isopropylmalate and 3-isopropylmalate, via the formation of 2-isopropylmaleate. The polypeptide is 3-isopropylmalate dehydratase large subunit (Synechococcus sp. (strain CC9902)).